The primary structure comprises 346 residues: Holliday junction branch migration complex subunit RuvB (346 aa).

A large ATPase domain (RuvB-L) region spans residues 1–182 (MKIELLNTPA…FGISSRFDYY (182 aa)). ATP contacts are provided by residues Ile21, Arg22, Gly63, Lys66, Thr67, Thr68, 129 to 131 (EDF), Arg172, Tyr182, and Arg219. Thr67 contributes to the Mg(2+) binding site. The tract at residues 183–253 (PPELLERIIL…IAMTTLASLE (71 aa)) is small ATPAse domain (RuvB-S). Positions 256-346 (EEGLDDMDKK…GPLFDAAPAR (91 aa)) are head domain (RuvB-H). DNA contacts are provided by Arg311 and Arg316.

The protein belongs to the RuvB family. Homohexamer. Forms an RuvA(8)-RuvB(12)-Holliday junction (HJ) complex. HJ DNA is sandwiched between 2 RuvA tetramers; dsDNA enters through RuvA and exits via RuvB. An RuvB hexamer assembles on each DNA strand where it exits the tetramer. Each RuvB hexamer is contacted by two RuvA subunits (via domain III) on 2 adjacent RuvB subunits; this complex drives branch migration. In the full resolvosome a probable DNA-RuvA(4)-RuvB(12)-RuvC(2) complex forms which resolves the HJ.

The protein resides in the cytoplasm. The catalysed reaction is ATP + H2O = ADP + phosphate + H(+). In terms of biological role, the RuvA-RuvB-RuvC complex processes Holliday junction (HJ) DNA during genetic recombination and DNA repair, while the RuvA-RuvB complex plays an important role in the rescue of blocked DNA replication forks via replication fork reversal (RFR). RuvA specifically binds to HJ cruciform DNA, conferring on it an open structure. The RuvB hexamer acts as an ATP-dependent pump, pulling dsDNA into and through the RuvAB complex. RuvB forms 2 homohexamers on either side of HJ DNA bound by 1 or 2 RuvA tetramers; 4 subunits per hexamer contact DNA at a time. Coordinated motions by a converter formed by DNA-disengaged RuvB subunits stimulates ATP hydrolysis and nucleotide exchange. Immobilization of the converter enables RuvB to convert the ATP-contained energy into a lever motion, pulling 2 nucleotides of DNA out of the RuvA tetramer per ATP hydrolyzed, thus driving DNA branch migration. The RuvB motors rotate together with the DNA substrate, which together with the progressing nucleotide cycle form the mechanistic basis for DNA recombination by continuous HJ branch migration. Branch migration allows RuvC to scan DNA until it finds its consensus sequence, where it cleaves and resolves cruciform DNA. The chain is Holliday junction branch migration complex subunit RuvB from Chlorobium phaeobacteroides (strain DSM 266 / SMG 266 / 2430).